The chain runs to 375 residues: Putrescine N-methyltransferase 1 (375 aa).

Polar residues-rich tracts occupy residues 24–50 (HQNGTSEHLNGYQNGTSKHQNGHQNGT) and 57–77 (HQNGTSEQQNGTISHDNGNEL). The tract at residues 24–77 (HQNGTSEHLNGYQNGTSKHQNGHQNGTFEHRNGHQNGTSEQQNGTISHDNGNEL) is disordered. One can recognise a PABS domain in the interval 86–323 (PGWFSEFSAL…GVIGYMLCST (238 aa)). S-adenosyl-L-methionine-binding positions include Q117, E192, and 223–224 (DG). The active-site Proton acceptor is the D242. Residue Y311 participates in S-adenosyl-L-methionine binding.

This sequence belongs to the class I-like SAM-binding methyltransferase superfamily. Putrescine methyltransferase family. As to expression, predominantly expressed in roots.

It carries out the reaction putrescine + S-adenosyl-L-methionine = N-methylputrescine + S-adenosyl-L-homocysteine + H(+). Its pathway is alkaloid biosynthesis; nicotine biosynthesis. Involved in the biosynthesis of pyridine alkaloid natural products, leading mainly to the production of anabasine, anatabine, nicotine and nornicotine, effective deterrents against herbivores with antiparasitic and pesticide properties (neurotoxins); nornicotine serves as the precursor in the synthesis of the carcinogen compound N'-nitrosonornicotine (NNN). Methyltransferase that mediates the conversion of putrescine to N-methylputrescine. Promotes leaves ripening. The polypeptide is Putrescine N-methyltransferase 1 (Nicotiana tabacum (Common tobacco)).